The primary structure comprises 307 residues: Aspartate carbamoyltransferase catalytic subunit (307 aa).

Positions 59 and 60 each coordinate carbamoyl phosphate. An L-aspartate-binding site is contributed by Lys87. Arg109, His137, and Gln140 together coordinate carbamoyl phosphate. The L-aspartate site is built by Arg173 and Arg223. The carbamoyl phosphate site is built by Gly266 and Pro267.

It belongs to the aspartate/ornithine carbamoyltransferase superfamily. ATCase family. In terms of assembly, heterododecamer (2C3:3R2) of six catalytic PyrB chains organized as two trimers (C3), and six regulatory PyrI chains organized as three dimers (R2).

It catalyses the reaction carbamoyl phosphate + L-aspartate = N-carbamoyl-L-aspartate + phosphate + H(+). It participates in pyrimidine metabolism; UMP biosynthesis via de novo pathway; (S)-dihydroorotate from bicarbonate: step 2/3. Its function is as follows. Catalyzes the condensation of carbamoyl phosphate and aspartate to form carbamoyl aspartate and inorganic phosphate, the committed step in the de novo pyrimidine nucleotide biosynthesis pathway. The sequence is that of Aspartate carbamoyltransferase catalytic subunit from Helicobacter pylori (strain Shi470).